Reading from the N-terminus, the 644-residue chain is Threonine--tRNA ligase (644 aa).

A TGS domain is found at 1 to 61 (MNVSIEGQML…DGTTTIEPVY (61 aa)). The catalytic stretch occupies residues 241-532 (DHRKLGQQLD…LIEQYAGAFP (292 aa)). Zn(2+) is bound by residues Cys-333, His-384, and His-509.

It belongs to the class-II aminoacyl-tRNA synthetase family. In terms of assembly, homodimer. Requires Zn(2+) as cofactor.

It is found in the cytoplasm. It catalyses the reaction tRNA(Thr) + L-threonine + ATP = L-threonyl-tRNA(Thr) + AMP + diphosphate + H(+). Catalyzes the attachment of threonine to tRNA(Thr) in a two-step reaction: L-threonine is first activated by ATP to form Thr-AMP and then transferred to the acceptor end of tRNA(Thr). Also edits incorrectly charged L-seryl-tRNA(Thr). This chain is Threonine--tRNA ligase, found in Nitratidesulfovibrio vulgaris (strain ATCC 29579 / DSM 644 / CCUG 34227 / NCIMB 8303 / VKM B-1760 / Hildenborough) (Desulfovibrio vulgaris).